Reading from the N-terminus, the 137-residue chain is MSYNCSSGNFSSCCFGSYLRYPVSTYNLFYPSNAIYSPNTCQLGSSLYNGCQETYCEPTSCQTSCTLARSYQTSCYCPKNSIFCSPRQTNYIRSLGCGNTGLGSLGCGSTGFQSLDCGSSFYHPTTFSSRNFQATCY.

Belongs to the PMG family. As to quaternary structure, interacts with hair keratins.

Its function is as follows. In the hair cortex, hair keratin intermediate filaments are embedded in an interfilamentous matrix, consisting of hair keratin-associated proteins (KRTAP), which are essential for the formation of a rigid and resistant hair shaft through their extensive disulfide bond cross-linking with abundant cysteine residues of hair keratins. The matrix proteins include the high-sulfur and high-glycine-tyrosine keratins. The polypeptide is Keratin-associated protein 15-1 (KRTAP15-1) (Homo sapiens (Human)).